We begin with the raw amino-acid sequence, 265 residues long: 3'(2'),5'-bisphosphate nucleotidase CysQ (265 aa).

Mg(2+) contacts are provided by E80, D99, L101, D102, and D222. Residue E80 participates in substrate binding. Residues 101-104 (LDGT) and D222 each bind substrate.

It belongs to the inositol monophosphatase superfamily. CysQ family. Mg(2+) is required as a cofactor.

Its subcellular location is the cell inner membrane. It catalyses the reaction adenosine 3',5'-bisphosphate + H2O = AMP + phosphate. Converts adenosine-3',5'-bisphosphate (PAP) to AMP. The sequence is that of 3'(2'),5'-bisphosphate nucleotidase CysQ from Buchnera aphidicola subsp. Acyrthosiphon pisum (strain APS) (Acyrthosiphon pisum symbiotic bacterium).